Here is a 182-residue protein sequence, read N- to C-terminus: Bifunctional protein PyrR (182 aa).

The short motif at 99–111 (IVLVDDVIFTGRT) is the PRPP-binding element.

This sequence belongs to the purine/pyrimidine phosphoribosyltransferase family. PyrR subfamily. As to quaternary structure, homodimer and homohexamer; in equilibrium.

The enzyme catalyses UMP + diphosphate = 5-phospho-alpha-D-ribose 1-diphosphate + uracil. Functionally, regulates transcriptional attenuation of the pyrimidine nucleotide (pyr) operon by binding in a uridine-dependent manner to specific sites on pyr mRNA. This disrupts an antiterminator hairpin in the RNA and favors formation of a downstream transcription terminator, leading to a reduced expression of downstream genes. In terms of biological role, also displays a weak uracil phosphoribosyltransferase activity which is not physiologically significant. This is Bifunctional protein PyrR from Caldicellulosiruptor saccharolyticus (strain ATCC 43494 / DSM 8903 / Tp8T 6331).